The primary structure comprises 144 residues: Large ribosomal subunit protein uL11 (144 aa).

This sequence belongs to the universal ribosomal protein uL11 family. As to quaternary structure, part of the ribosomal stalk of the 50S ribosomal subunit. Interacts with L10 and the large rRNA to form the base of the stalk. L10 forms an elongated spine to which L12 dimers bind in a sequential fashion forming a multimeric L10(L12)X complex. In terms of processing, one or more lysine residues are methylated.

Forms part of the ribosomal stalk which helps the ribosome interact with GTP-bound translation factors. The polypeptide is Large ribosomal subunit protein uL11 (Streptomyces griseus subsp. griseus (strain JCM 4626 / CBS 651.72 / NBRC 13350 / KCC S-0626 / ISP 5235)).